Consider the following 201-residue polypeptide: ATP-dependent Clp protease proteolytic subunit (201 aa).

Serine 103 (nucleophile) is an active-site residue. Residue histidine 128 is part of the active site.

The protein belongs to the peptidase S14 family. As to quaternary structure, fourteen ClpP subunits assemble into 2 heptameric rings which stack back to back to give a disk-like structure with a central cavity, resembling the structure of eukaryotic proteasomes.

It localises to the cytoplasm. It carries out the reaction Hydrolysis of proteins to small peptides in the presence of ATP and magnesium. alpha-casein is the usual test substrate. In the absence of ATP, only oligopeptides shorter than five residues are hydrolyzed (such as succinyl-Leu-Tyr-|-NHMec, and Leu-Tyr-Leu-|-Tyr-Trp, in which cleavage of the -Tyr-|-Leu- and -Tyr-|-Trp bonds also occurs).. Functionally, cleaves peptides in various proteins in a process that requires ATP hydrolysis. Has a chymotrypsin-like activity. Plays a major role in the degradation of misfolded proteins. The polypeptide is ATP-dependent Clp protease proteolytic subunit (Bordetella avium (strain 197N)).